A 429-amino-acid polypeptide reads, in one-letter code: D-amino acid dehydrogenase (429 aa).

Residue 3–17 participates in FAD binding; it reads VLILGSGVIGVTSAW.

This sequence belongs to the DadA oxidoreductase family. FAD serves as cofactor.

It catalyses the reaction a D-alpha-amino acid + A + H2O = a 2-oxocarboxylate + AH2 + NH4(+). Oxidative deamination of D-amino acids. This Xanthomonas axonopodis pv. citri (strain 306) protein is D-amino acid dehydrogenase.